Reading from the N-terminus, the 479-residue chain is Glutamyl-tRNA(Gln) amidotransferase subunit A (479 aa).

Residues lysine 71 and serine 146 each act as charge relay system in the active site. Serine 170 functions as the Acyl-ester intermediate in the catalytic mechanism.

The protein belongs to the amidase family. GatA subfamily. Heterotrimer of A, B and C subunits.

It catalyses the reaction L-glutamyl-tRNA(Gln) + L-glutamine + ATP + H2O = L-glutaminyl-tRNA(Gln) + L-glutamate + ADP + phosphate + H(+). Functionally, allows the formation of correctly charged Gln-tRNA(Gln) through the transamidation of misacylated Glu-tRNA(Gln) in organisms which lack glutaminyl-tRNA synthetase. The reaction takes place in the presence of glutamine and ATP through an activated gamma-phospho-Glu-tRNA(Gln). The sequence is that of Glutamyl-tRNA(Gln) amidotransferase subunit A from Lactobacillus johnsonii (strain CNCM I-12250 / La1 / NCC 533).